The following is a 488-amino-acid chain: Glutamyl-tRNA(Gln) amidotransferase subunit A (488 aa).

Active-site charge relay system residues include K77 and S152. S176 acts as the Acyl-ester intermediate in catalysis.

Belongs to the amidase family. GatA subfamily. Heterotrimer of A, B and C subunits.

It catalyses the reaction L-glutamyl-tRNA(Gln) + L-glutamine + ATP + H2O = L-glutaminyl-tRNA(Gln) + L-glutamate + ADP + phosphate + H(+). Allows the formation of correctly charged Gln-tRNA(Gln) through the transamidation of misacylated Glu-tRNA(Gln) in organisms which lack glutaminyl-tRNA synthetase. The reaction takes place in the presence of glutamine and ATP through an activated gamma-phospho-Glu-tRNA(Gln). The polypeptide is Glutamyl-tRNA(Gln) amidotransferase subunit A (Streptococcus pneumoniae (strain ATCC 700669 / Spain 23F-1)).